The following is a 217-amino-acid chain: Outer-membrane lipoprotein LolB (217 aa).

The first 20 residues, 1 to 20, serve as a signal peptide directing secretion; sequence MSKALRTLALSGLVLVGLSA. Residue Cys21 is the site of N-palmitoyl cysteine attachment. A lipid anchor (S-diacylglycerol cysteine) is attached at Cys21.

This sequence belongs to the LolB family. As to quaternary structure, monomer.

It localises to the cell outer membrane. Functionally, plays a critical role in the incorporation of lipoproteins in the outer membrane after they are released by the LolA protein. The protein is Outer-membrane lipoprotein LolB of Xanthomonas oryzae pv. oryzae (strain MAFF 311018).